The following is a 1191-amino-acid chain: Probable inositol polyphosphate 5-phosphatase C9G1.10c (1191 aa).

Polar residues-rich tracts occupy residues 1–10 (MASRQGFSNV), 72–101 (QVSS…NPSN), 114–135 (SDSS…SFVS), 151–161 (SFQSSVQSTKG), and 181–193 (NFSS…SPIS). Residues 1 to 193 (MASRQGFSNV…SKAGSSSPIS (193 aa)) form a disordered region. Phosphoserine is present on Ser-195. Disordered stretches follow at residues 205-281 (SQSP…PQPV), 294-334 (SQQL…DASL), and 355-425 (IPEK…SSSS). Over residues 268-280 (TPPPIPSPRPPQP) the composition is skewed to pro residues. The segment covering 302-311 (SPRKPPKPPL) has biased composition (basic residues). Composition is skewed to polar residues over residues 316–334 (TQRS…DASL), 367–382 (HTLS…SENL), and 400–413 (LATN…VSTE). Low complexity predominate over residues 414–425 (QSDPSVAASSSS).

This sequence belongs to the inositol 1,4,5-trisphosphate 5-phosphatase family.

Its subcellular location is the cytoplasm. This chain is Probable inositol polyphosphate 5-phosphatase C9G1.10c, found in Schizosaccharomyces pombe (strain 972 / ATCC 24843) (Fission yeast).